The sequence spans 711 residues: Early transcription factor 82 kDa subunit (711 aa).

This sequence belongs to the poxviridae VETF large subunit family. In terms of assembly, heterodimer of a 70 kDa and a 82 kDa subunit. Part of the early transcription complex composed of ETF, RAP94, and the DNA-directed RNA polymerase.

Its subcellular location is the virion. Acts with RNA polymerase to initiate transcription from early gene promoters. Is recruited by the RPO-associated protein of 94 kDa (RAP94) to form the early transcription complex, which also contains the core RNA polymerase. ETF heterodimer binds to early gene promoters. The polypeptide is Early transcription factor 82 kDa subunit (VETFL) (Oryctolagus cuniculus (Rabbit)).